The chain runs to 417 residues: uncharacterized protein (417 aa).

Transmembrane regions (helical) follow at residues 87 to 107 (LVVA…GYWI), 130 to 150 (IAGT…TPSV), 177 to 197 (FFIT…VYAA), and 202 to 222 (IIDT…LWPD). Residues 366-398 (APSAPAAAEHKATSSSNSSNSSPGSSNPTTAPT) show a composition bias toward low complexity. A disordered region spans residues 366 to 417 (APSAPAAAEHKATSSSNSSNSSPGSSNPTTAPTDKFRTGSPKTQPEKISAFW).

This sequence belongs to the YccS/YhfK family.

It is found in the cell membrane. This is an uncharacterized protein from Neisseria gonorrhoeae.